A 757-amino-acid polypeptide reads, in one-letter code: LPS-assembly protein LptD (757 aa).

Positions 1 to 20 (MLQRFITSLMLLPFPGSALA) are cleaved as a signal peptide.

The protein belongs to the LptD family. Component of the lipopolysaccharide transport and assembly complex. Interacts with LptE and LptA.

It is found in the cell outer membrane. Its function is as follows. Together with LptE, is involved in the assembly of lipopolysaccharide (LPS) at the surface of the outer membrane. This chain is LPS-assembly protein LptD, found in Idiomarina loihiensis (strain ATCC BAA-735 / DSM 15497 / L2-TR).